Reading from the N-terminus, the 515-residue chain is Galactokinase (515 aa).

Arginine 48, aspartate 54, histidine 55, and aspartate 57 together coordinate alpha-D-galactose. ATP-binding residues include glycine 155, glycine 157, serine 159, and serine 160. Residue aspartate 205 participates in alpha-D-galactose binding. Aspartate 205 functions as the Proton acceptor in the catalytic mechanism. Residues serine 249, asparagine 250, and lysine 251 each coordinate ATP. Alpha-D-galactose is bound at residue tyrosine 259.

It belongs to the GHMP kinase family. GalK subfamily.

The catalysed reaction is alpha-D-galactose + ATP = alpha-D-galactose 1-phosphate + ADP + H(+). It participates in carbohydrate metabolism; galactose metabolism. Functionally, galactokinase is a key enzyme in the galactose metabolism where it catalyzes the conversion of alpha-D-galactose to galactose 1-phosphate. Can also induce the transcription of the gal genes in response to the organism being challenged with galactose as the sole source of carbon. This Candida albicans (Yeast) protein is Galactokinase.